A 22-amino-acid chain; its full sequence is Heliocin (22 aa).

Position 1 is a pyrrolidone carboxylic acid (glutamine 1). The interval 1 to 22 is disordered; that stretch reads QRFIHPTYRPPPQPRRPVIMRA. O-linked (GalNAc...) threonine glycosylation occurs at threonine 7.

Monomer. Hemolymph.

The protein resides in the secreted. Its function is as follows. Has antibacterial activity, preferentially against Gram-negative bacteria. The polypeptide is Heliocin (Heliothis virescens (Tobacco budworm moth)).